The following is a 505-amino-acid chain: RNA-splicing ligase RtcB homolog (505 aa).

4 residues coordinate Mn(2+): D119, C122, H227, and H259. 226–230 (NHYAE) provides a ligand contact to GMP. A Phosphoserine modification is found at S300. H353 is a Mn(2+) binding site. GMP contacts are provided by residues 353–354 (HN), 402–405 (GGTM), S409, and 428–431 (HGAG). H428 functions as the GMP-histidine intermediate in the catalytic mechanism. A Glycyl lysine isopeptide (Lys-Gly) (interchain with G-Cter in SUMO2) cross-link involves residue K496. K504 contacts GMP.

It belongs to the RtcB family. As to quaternary structure, catalytic component of the tRNA-splicing ligase complex. Mn(2+) is required as a cofactor.

Its subcellular location is the nucleus. It localises to the cytoplasm. It carries out the reaction a 3'-end 3'-phospho-ribonucleotide-RNA + a 5'-end dephospho-ribonucleoside-RNA + GTP = a ribonucleotidyl-ribonucleotide-RNA + GMP + diphosphate. The enzyme catalyses a 3'-end 2',3'-cyclophospho-ribonucleotide-RNA + a 5'-end dephospho-ribonucleoside-RNA + GTP + H2O = a ribonucleotidyl-ribonucleotide-RNA + GMP + diphosphate + H(+). Its function is as follows. Catalytic subunit of the tRNA-splicing ligase complex that acts by directly joining spliced tRNA halves to mature-sized tRNAs by incorporating the precursor-derived splice junction phosphate into the mature tRNA as a canonical 3',5'-phosphodiester. May act as an RNA ligase with broad substrate specificity, and may function toward other RNAs. This Rattus norvegicus (Rat) protein is RNA-splicing ligase RtcB homolog.